The chain runs to 84 residues: Cell division topological specificity factor (84 aa).

It belongs to the MinE family.

Functionally, prevents the cell division inhibition by proteins MinC and MinD at internal division sites while permitting inhibition at polar sites. This ensures cell division at the proper site by restricting the formation of a division septum at the midpoint of the long axis of the cell. This is Cell division topological specificity factor from Pseudomonas fluorescens (strain ATCC BAA-477 / NRRL B-23932 / Pf-5).